The following is a 179-amino-acid chain: MSRIGKIPVTVPGGVDVSIDGQDVTVKGPKGTLALTISEPIVIAKNDDGTLSVTRPDDERRSRALHGLSRTLVQNLITGVTDGYTTKMEIHGVGYRVALKGKDLEFALGYSHPVPIEAPEGITFAVESPTKFSVSGIDKQKVGQISANIRRLRRPDPYKGKGVRYEGEQIRRKVGKTGK.

Belongs to the universal ribosomal protein uL6 family. Part of the 50S ribosomal subunit.

Its function is as follows. This protein binds to the 23S rRNA, and is important in its secondary structure. It is located near the subunit interface in the base of the L7/L12 stalk, and near the tRNA binding site of the peptidyltransferase center. This chain is Large ribosomal subunit protein uL6, found in Rhodococcus opacus (strain B4).